Reading from the N-terminus, the 203-residue chain is Small ribosomal subunit protein uS4 (203 aa).

The S4 RNA-binding domain maps to cysteine 93 to asparagine 154.

The protein belongs to the universal ribosomal protein uS4 family. In terms of assembly, part of the 30S ribosomal subunit. Contacts protein S5. The interaction surface between S4 and S5 is involved in control of translational fidelity.

One of the primary rRNA binding proteins, it binds directly to 16S rRNA where it nucleates assembly of the body of the 30S subunit. Its function is as follows. With S5 and S12 plays an important role in translational accuracy. The protein is Small ribosomal subunit protein uS4 of Chloroherpeton thalassium (strain ATCC 35110 / GB-78).